A 643-amino-acid chain; its full sequence is Transmembrane 9 superfamily member 4 (643 aa).

The signal sequence occupies residues 1-23; it reads MAAAMIWWPRFLLLLCLTCKGST. Over 24-282 the chain is Extracellular; that stretch reads FYVPGVAPIN…TMSDVQIHWF (259 aa). A helical transmembrane segment spans residues 283–303; sequence SIINSVVVVFFLSGILSMIII. The Cytoplasmic segment spans residues 304–347; that stretch reads RTLRKDIANYNKEDDIEDTMEESGWKLVHGDVFRPPQYPMILSS. Tyr-313 carries the phosphotyrosine modification. A helical transmembrane segment spans residues 348 to 368; that stretch reads LLGSGIQLFCMILIVIFVAML. At 369-377 the chain is on the extracellular side; it reads GMLSPSSRG. Residues 378–398 traverse the membrane as a helical segment; the sequence is ALMTTACFLFMFMGVFGGFSA. Over 399 to 417 the chain is Cytoplasmic; the sequence is GRLYRTLKGHRWKKGAFCT. A helical membrane pass occupies residues 418–438; the sequence is ATLYPGVVFGICFVLNCFIWG. Residues 439–450 lie on the Extracellular side of the membrane; that stretch reads KHSSGAVPFPTM. The helical transmembrane segment at 451 to 471 threads the bilayer; sequence VALLCMWFGISLPLVYLGYYF. Residues 472-502 lie on the Cytoplasmic side of the membrane; the sequence is GFRKQPYDNPVRTNQIPRQIPEQRWYMNRFV. A helical transmembrane segment spans residues 503-523; it reads GILMAGILPFGAMFIELFFIF. Residues 524–536 lie on the Extracellular side of the membrane; the sequence is SAIWENQFYYLFG. A helical transmembrane segment spans residues 537 to 557; it reads FLFLVFIILVVSCSQISIVMV. The Cytoplasmic segment spans residues 558 to 571; it reads YFQLCAEDYRWWWR. The chain crosses the membrane as a helical span at residues 572-592; that stretch reads NFLVSGGSAFYVLVYAIFYFV. Topologically, residues 593-599 are extracellular; that stretch reads NKLDIVE. A helical membrane pass occupies residues 600–620; sequence FIPSLLYFGYTTLMVLSFWLL. The Cytoplasmic portion of the chain corresponds to 621 to 643; that stretch reads TGTIGFYAAYMFVRKIYAAVKID.

Belongs to the nonaspanin (TM9SF) (TC 9.A.2) family.

Its subcellular location is the membrane. It is found in the golgi apparatus. The protein localises to the early endosome. Its function is as follows. Associates with proteins harboring glycine-rich transmembrane domains and ensures their efficient localization to the cell surface. The polypeptide is Transmembrane 9 superfamily member 4 (Tm9sf4) (Mus musculus (Mouse)).